A 436-amino-acid chain; its full sequence is Proteasome-activating nucleotidase (436 aa).

Residues 15 to 97 (EELCRLYRSL…LKSESEQLRS (83 aa)) adopt a coiled-coil conformation. ATP-binding positions include 222 to 227 (GTGKTL) and H361. The segment at 434–436 (MFA) is docks into pockets in the proteasome alpha-ring to cause gate opening.

This sequence belongs to the AAA ATPase family. In terms of assembly, homohexamer. The hexameric complex has a two-ring architecture resembling a top hat that caps the 20S proteasome core at one or both ends. Upon ATP-binding, the C-terminus of PAN interacts with the alpha-rings of the proteasome core by binding to the intersubunit pockets.

Its subcellular location is the cytoplasm. Functionally, ATPase which is responsible for recognizing, binding, unfolding and translocation of substrate proteins into the archaeal 20S proteasome core particle. Is essential for opening the gate of the 20S proteasome via an interaction with its C-terminus, thereby allowing substrate entry and access to the site of proteolysis. Thus, the C-termini of the proteasomal ATPase function like a 'key in a lock' to induce gate opening and therefore regulate proteolysis. Unfolding activity requires energy from ATP hydrolysis, whereas ATP binding alone promotes ATPase-20S proteasome association which triggers gate opening, and supports translocation of unfolded substrates. In Methanoregula boonei (strain DSM 21154 / JCM 14090 / 6A8), this protein is Proteasome-activating nucleotidase.